The sequence spans 430 residues: Dihydroorotase (430 aa).

The Zn(2+) site is built by His61 and His63. Residues 63–65 and Asn95 contribute to the substrate site; that span reads HLR. Residues Asp153, His180, and His233 each coordinate Zn(2+). Asn279 lines the substrate pocket. Residue Asp306 coordinates Zn(2+). The active site involves Asp306. Substrate is bound by residues His310 and 324–325; that span reads FG.

Belongs to the metallo-dependent hydrolases superfamily. DHOase family. Class I DHOase subfamily. The cofactor is Zn(2+).

It carries out the reaction (S)-dihydroorotate + H2O = N-carbamoyl-L-aspartate + H(+). It participates in pyrimidine metabolism; UMP biosynthesis via de novo pathway; (S)-dihydroorotate from bicarbonate: step 3/3. Functionally, catalyzes the reversible cyclization of carbamoyl aspartate to dihydroorotate. The chain is Dihydroorotase from Lactiplantibacillus plantarum (strain ATCC BAA-793 / NCIMB 8826 / WCFS1) (Lactobacillus plantarum).